The following is a 1149-amino-acid chain: Golgi apparatus protein 1 homolog (1149 aa).

An N-terminal signal peptide occupies residues 1 to 19 (MWRFPLILASVCWLTTAQQ). Residues 20–1115 (QNVANDPDKK…NLVMEHPERN (1096 aa)) are Extracellular-facing. Cys-rich GLG1 repeat units lie at residues 24–69 (NDPD…FSET), 71–135 (TLSE…KNVT), 139–207 (KCHA…VKNA), 216–276 (ILGD…NDKF), 277–344 (MDPE…NQPE), 349–411 (QPSK…ESRN), 415–475 (KLGA…NVDS), 477–549 (DMVP…YDEQ), 551–610 (PLSV…ETDN), 613–676 (RKHP…DAKE), 677–736 (MNNK…FEHK), 743–803 (DLTD…IECL), 809–867 (HLGP…IVRL), 868–938 (LQRE…RQSI), 945–1009 (DFSP…NKGL), and 1010–1070 (IRDK…DKQE). N-linked (GlcNAc...) asparagine glycosylation is present at Asn-133. A glycan (N-linked (GlcNAc...) asparagine) is linked at Asn-411. The helical transmembrane segment at 1116 to 1136 (SILGYLAGFIVFILLIGCCCG) threads the bilayer. Over 1137–1149 (RVSKKQYIEMKNR) the chain is Cytoplasmic.

The protein resides in the membrane. This chain is Golgi apparatus protein 1 homolog, found in Caenorhabditis elegans.